A 113-amino-acid chain; its full sequence is Large ribosomal subunit protein uL22 (113 aa).

The protein belongs to the universal ribosomal protein uL22 family. Part of the 50S ribosomal subunit.

In terms of biological role, this protein binds specifically to 23S rRNA; its binding is stimulated by other ribosomal proteins, e.g. L4, L17, and L20. It is important during the early stages of 50S assembly. It makes multiple contacts with different domains of the 23S rRNA in the assembled 50S subunit and ribosome. The globular domain of the protein is located near the polypeptide exit tunnel on the outside of the subunit, while an extended beta-hairpin is found that lines the wall of the exit tunnel in the center of the 70S ribosome. The protein is Large ribosomal subunit protein uL22 of Symbiobacterium thermophilum (strain DSM 24528 / JCM 14929 / IAM 14863 / T).